A 2737-amino-acid chain; its full sequence is Non-reducing polyketide synthase ATEG_07661 (2737 aa).

Residues 75–245 form an N-terminal acylcarrier protein transacylase domain (SAT) region; that stretch reads SRSLAELDSW…VRYDQTRATV (171 aa). Cysteine 154 (nucleophile; for transacylase activity) is an active-site residue. The active-site Proton donor/acceptor; for transacylase activity is the histidine 276. The 428-residue stretch at 427–854 folds into the Ketosynthase family 3 (KS3) domain; sequence NEAIAIVGMS…GSNASMIITE (428 aa). Catalysis depends on for beta-ketoacyl synthase activity residues cysteine 603, histidine 738, and histidine 777. Residues 969 to 1260 form a malonyl-CoA:ACP transacylase (MAT) region; that stretch reads FGGQVSRFVG…IMASRAIAQS (292 aa). The tract at residues 1368–1503 is N-terminal hotdog fold; sequence LQSLWNFVEF…ASVEMRAPTD (136 aa). The region spanning 1368–1683 is the PKS/mFAS DH domain; sequence LQSLWNFVEF…YGRVAKASMS (316 aa). A product template (PT) domain region spans residues 1399–1681; sequence FVLSHVIAQT…VQYGRVAKAS (283 aa). Residue histidine 1403 is the Proton acceptor; for dehydratase activity of the active site. The C-terminal hotdog fold stretch occupies residues 1535–1683; sequence VEVLQGRNVY…YGRVAKASMS (149 aa). The active-site Proton donor; for dehydratase activity is the aspartate 1592. The tract at residues 1724–1747 is disordered; the sequence is SRTTKKKAKASKSKSSVKKDKAPS. Residues 1725-1739 are compositionally biased toward basic residues; the sequence is RTTKKKAKASKSKSS. The region spanning 1750-1824 is the Carrier domain; sequence RDITDEVRNL…KFVACVSNAL (75 aa). Position 1784 is an O-(pantetheine 4'-phosphoryl)serine (serine 1784). A disordered region spans residues 1827 to 1876; the sequence is PNQGQSSIDEDDEDDEHSEDSSNESSSAASDEDASSGLESPDTGILTPED. The span at 1834–1848 shows a compositional bias: acidic residues; it reads IDEDDEDDEHSEDSS. A compositionally biased stretch (low complexity) spans 1849–1866; it reads NESSSAASDEDASSGLES. Positions 2094-2270 are methyltransferase domain; that stretch reads ADRIQSSSGS…GFGHVDWTDG (177 aa). The NADPH-binding domain stretch occupies residues 2362–2665; that stretch reads VVLVTGATGS…IPFKDWISRV (304 aa).

It functions in the pathway secondary metabolite biosynthesis. Non-reducing polyketide synthase; part of the cluster B that mediates the biosynthesis of azasperpyranones, members of the azaphilone family that exhibit anti-cancer activities. Azasperpyranones are synthesized by 2 clusters, A and B. Cluster A is responsible for the production of the polyhydric phenol moiety while the azaphilonoid scaffold is produced by the cluster B. The non-reducing polyketide synthase ATEG_03629 produces 5-methyl orsellinic acid, which is then reduced to 5-methyl orsellinic aldehyde by the NRPS-like protein ATEG_03630. 5-methyl orsellinic aldehyde is then first hydroxylated by the FAD-dependent monooxygenase ATEG_03635 and subsequently hydroxylated by the cytochrome P450 monooxygenase ATEG_03631 to produce the unstable polyhydric phenol precursor of azasperpyranones. On the other hand, the polyketide synthase ATEG_07659 is responsible for producing the 3,5-dimethyloctadienone moiety from acetyl-CoA, three malonyl-CoA, and two S-adenosyl methionines (SAM). The 3,5-dimethyloctadienone moiety is then loaded onto the SAT domain of ATEG_07661 and extended with four malonyl-CoA and one SAM, which leads to the formation of 2,4-dihydroxy-6-(5,7-dimethyl-2-oxo-trans-3-trans-5-nonadienyl)-3-methylbenzaldehyde (compound 8) after reductive release and aldol condensation. The FAD-dependent monooxygenase ATEG_07662 is the next enzyme in the biosynthesis sequence and hydroxylates the side chain at the benzylic position of compound 8. In Aspergillus nidulans, afoF, the ortholog of the FAD-dependent oxygenase ATEG_07660, is the key enzyme for the biosynthesis of asperfuranone by catalyzing the hydroxylation at C-8 of to prevent the formation of a six-membered ring hemiacetal intermediate and thus facilitating the formation of a five-membered ring to produce asperfuranone. In Aspergillus terreus, ATEG_07660 is probably not functional, which leads to the formation of the six-membered ring hemiacetal intermediate presperpyranone instead of asperfuranone. Finally, ATEG_03636 is involved in the condensation of the polyhydric phenol moiety produced by cluster A and the perasperpyranone precursor produced by cluster B, to yield azasperpyranone A. Further modifications of azasperpyranone A result in the production of derivatives, including azasperpyranone B to F. The chain is Non-reducing polyketide synthase ATEG_07661 from Aspergillus terreus (strain NIH 2624 / FGSC A1156).